The primary structure comprises 476 residues: CDK5 and ABL1 enzyme substrate 2 (476 aa).

A disordered region spans residues 1 to 119; that stretch reads MAAAAAGGAP…GLGLDGQRQR (119 aa). Basic residues predominate over residues 30–40; that stretch reads PRRRGDSRRRQ. A compositionally biased stretch (pro residues) spans 65–96; it reads PAPPPPPPTEAREAPAPPPAPPGGLPGLPARP. Phosphoserine is present on residues S128 and S206. The tract at residues 256 to 295 is disordered; it reads DSHGLLPQPRPSIPRAPPGSRHKPVPTKSTPAGTELGSDG. Residues 263 to 272 are compositionally biased toward pro residues; it reads QPRPSIPRAP.

The protein belongs to the cyclin family. In terms of assembly, binds to CDK3, CDK5 and ABL1. The C-terminal cyclin-box-like region binds to CDK5. As to expression, widely expressed.

Its function is as follows. Unknown. Probably involved in G1-S cell cycle transition. In Mus musculus (Mouse), this protein is CDK5 and ABL1 enzyme substrate 2 (Cables2).